The sequence spans 858 residues: DNA mismatch repair protein MutS (858 aa).

ATP is bound at residue 602 to 609 (GPNMSGKS).

This sequence belongs to the DNA mismatch repair MutS family.

This protein is involved in the repair of mismatches in DNA. It is possible that it carries out the mismatch recognition step. This protein has a weak ATPase activity. Overexpression of mutSL partially suppresses the high spontaneous mutation frequency of a ytkD/mutM/mutY triple disruption which lacks the system required to prevent damage by oxidized guanine (8-oxo-dGTP). This suggests that MutSL also functions to repair mismatches due to oxidative stress in both growing and stationary phase cells. This chain is DNA mismatch repair protein MutS, found in Bacillus subtilis (strain 168).